The chain runs to 148 residues: 3-hydroxyacyl-[acyl-carrier-protein] dehydratase FabZ (148 aa).

The active site involves histidine 55.

The protein belongs to the thioester dehydratase family. FabZ subfamily.

It localises to the cytoplasm. It catalyses the reaction a (3R)-hydroxyacyl-[ACP] = a (2E)-enoyl-[ACP] + H2O. Its function is as follows. Involved in unsaturated fatty acids biosynthesis. Catalyzes the dehydration of short chain beta-hydroxyacyl-ACPs and long chain saturated and unsaturated beta-hydroxyacyl-ACPs. The chain is 3-hydroxyacyl-[acyl-carrier-protein] dehydratase FabZ from Haemophilus influenzae (strain ATCC 51907 / DSM 11121 / KW20 / Rd).